The chain runs to 121 residues: uncharacterized protein (121 aa).

The next 3 helical transmembrane spans lie at 26–46, 57–77, and 90–110; these read YACSIFLLSSYCGNCLTAVAT, SIPLLTLVLLPSTTPSSSVLI, and SFCFTLALLSLLIPPLKLLCV.

The protein resides in the membrane. This is an uncharacterized protein from Saccharomyces cerevisiae (strain ATCC 204508 / S288c) (Baker's yeast).